The following is a 417-amino-acid chain: Serine hydroxymethyltransferase (417 aa).

(6S)-5,6,7,8-tetrahydrofolate contacts are provided by residues Leu120 and 124-126 (GHL). At Lys229 the chain carries N6-(pyridoxal phosphate)lysine.

Belongs to the SHMT family. Homodimer. Pyridoxal 5'-phosphate serves as cofactor.

It localises to the cytoplasm. The catalysed reaction is (6R)-5,10-methylene-5,6,7,8-tetrahydrofolate + glycine + H2O = (6S)-5,6,7,8-tetrahydrofolate + L-serine. The protein operates within one-carbon metabolism; tetrahydrofolate interconversion. It functions in the pathway amino-acid biosynthesis; glycine biosynthesis; glycine from L-serine: step 1/1. Functionally, catalyzes the reversible interconversion of serine and glycine with tetrahydrofolate (THF) serving as the one-carbon carrier. This reaction serves as the major source of one-carbon groups required for the biosynthesis of purines, thymidylate, methionine, and other important biomolecules. Also exhibits THF-independent aldolase activity toward beta-hydroxyamino acids, producing glycine and aldehydes, via a retro-aldol mechanism. This Anaeromyxobacter dehalogenans (strain 2CP-1 / ATCC BAA-258) protein is Serine hydroxymethyltransferase.